The sequence spans 758 residues: Microtubule-associated protein tau (758 aa).

Positions M1 to Q26 are enriched in basic and acidic residues. The disordered stretch occupies residues M1–V573. A2 bears the N-acetylalanine mark. Y18 and Y29 each carry phosphotyrosine. K44 is covalently cross-linked (Glycyl lysine isopeptide (Lys-Gly) (interchain with G-Cter in ubiquitin)). Residues S46 and S61 each carry the phosphoserine modification. Polar residues predominate over residues S61–T71. Phosphothreonine occurs at positions 69, 71, and 111. Basic and acidic residues-rich tracts occupy residues E179–K189 and G207–E216. Residue S214 is modified to Phosphoserine. Acidic residues predominate over residues E217–S228. The span at E314 to R323 shows a compositional bias: basic and acidic residues. Residues A325 to P340 are compositionally biased toward low complexity. 2 stretches are compositionally biased toward basic and acidic residues: residues E344 to E356 and K381 to A393. Residues K440–S452 show a composition bias toward polar residues. A compositionally biased stretch (basic and acidic residues) spans K455–T466. T470 is subject to Phosphothreonine. R472 carries the post-translational modification Omega-N-methylarginine. K480 bears the N6,N6-dimethyllysine; alternate mark. K480 bears the N6-acetyllysine; alternate mark. 3 positions are modified to phosphothreonine: T486, T492, and T498. Over residues K491–G503 the composition is skewed to pro residues. S502, S508, and S512 each carry phosphoserine. Residues E504–S531 are compositionally biased toward low complexity. Y514 carries the post-translational modification Phosphotyrosine. Phosphoserine occurs at positions 515, 516, and 519. Phosphothreonine occurs at positions 522 and 529. Phosphoserine is present on S531. T534 carries the phosphothreonine modification. K542 is subject to N6-acetyllysine. Phosphothreonine is present on T548. 2 positions are modified to phosphoserine: S552 and S554. 4 Tau/MAP repeats span residues Q561–K591, V592–S622, V623–Q653, and V654–H685. Residue K571 forms a Glycyl lysine isopeptide (Lys-Gly) (interchain with G-Cter in ubiquitin) linkage. At K576 the chain carries N6-acetyllysine; alternate. Position 576 is an N6-methyllysine; alternate (K576). K576 participates in a covalent cross-link: Glycyl lysine isopeptide (Lys-Gly) (interchain with G-Cter in ubiquitin); alternate. S579 bears the Phosphoserine mark. Residue K584 forms a Glycyl lysine isopeptide (Lys-Gly) (interchain with G-Cter in ubiquitin) linkage. Residue K598 is modified to N6-acetyllysine; alternate. Residue K598 forms a Glycyl lysine isopeptide (Lys-Gly) (interchain with G-Cter in ubiquitin); alternate linkage. Phosphoserine occurs at positions 602 and 606. N6-acetyllysine is present on K607. A Phosphoserine modification is found at S610. N6-acetyllysine; alternate is present on K615. A Glycyl lysine isopeptide (Lys-Gly) (interchain with G-Cter in ubiquitin); alternate cross-link involves residue K615. Residue S622 is modified to Phosphoserine. K628 is modified (N6,N6-dimethyllysine; alternate). An N6-acetyllysine; alternate mark is found at K628, K634, and K638. Residues K628, K634, and K638 each participate in a glycyl lysine isopeptide (Lys-Gly) (interchain with G-Cter in ubiquitin); alternate cross-link. A Phosphoserine modification is found at S641. N6-acetyllysine; alternate occurs at positions 648, 660, and 664. Residues K648, K660, and K664 each participate in a glycyl lysine isopeptide (Lys-Gly) (interchain with G-Cter in ubiquitin); alternate cross-link. Position 666 is an omega-N-methylarginine (R666). At S669 the chain carries Phosphoserine. Residue K670 forms a Glycyl lysine isopeptide (Lys-Gly) (interchain with G-Cter in ubiquitin) linkage. Position 673 is a phosphoserine (S673). K686 bears the N6-acetyllysine; alternate mark. K686 participates in a covalent cross-link: Glycyl lysine isopeptide (Lys-Gly) (interchain with G-Cter in ubiquitin); alternate. K692 participates in a covalent cross-link: Glycyl lysine isopeptide (Lys-Gly) (interchain with G-Cter in ubiquitin). Position 702 is an N6-acetyllysine; alternate (K702). K702 is covalently cross-linked (Glycyl lysine isopeptide (Lys-Gly) (interchain with G-Cter in ubiquitin); alternate). Phosphotyrosine is present on Y711. S713 and S717 each carry phosphoserine. The disordered stretch occupies residues V715 to I734. Residues G718 to S733 show a composition bias toward polar residues. A Phosphothreonine modification is found at T720. 4 positions are modified to phosphoserine: S721, S726, S733, and S739. Position 744 is a phosphothreonine (T744).

In terms of assembly, interacts with MARK1, MARK2, MARK3 and MARK4. Interacts with SQSTM1 when polyubiquitinated. Interacts with PSMC2 through SQSTM1. Interacts with FKBP4. Binds to CSNK1D. Interacts with SGK1. Interacts with EPM2A; the interaction dephosphorylates MAPT at Ser-396. Interacts with PIN1. Interacts with LRRK2. Interacts with LRP1, leading to endocytosis; this interaction is reduced in the presence of LRPAP1/RAP. In terms of processing, polyubiquitinated. Requires functional TRAF6 and may provoke SQSTM1-dependent degradation by the proteasome. Post-translationally, phosphorylation at various serine and threonine residues in S-P or T-P motifs by proline-directed protein kinases (PDPK1, CDK1, CDK5, GSK3, MAPK) (a few sites per protein in interphase, more in mitosis), and at serine residues in K-X-G-S motifs by MAP/microtubule affinity-regulating kinase (MARK1, MARK2, MARK3 or MARK4), causing detachment from microtubules, and their disassembly. Phosphorylation at Ser-579 by BRSK1 and BRSK2 in neurons affects ability to bind microtubules and plays a role in neuron polarization. Phosphorylated by PHK. Dephosphorylation at several serine and threonine residues by the serine/threonine phosphatase PPP5C. Phosphorylation at Ser-214 by SGK1 mediates microtubule depolymerization and neurite formation in hippocampal neurons.

The protein resides in the cytoplasm. It localises to the cytosol. Its subcellular location is the cell membrane. It is found in the cytoskeleton. The protein localises to the cell projection. The protein resides in the axon. It localises to the dendrite. Promotes microtubule assembly and stability, and might be involved in the establishment and maintenance of neuronal polarity. The C-terminus binds axonal microtubules while the N-terminus binds neural plasma membrane components, suggesting that tau functions as a linker protein between both. Axonal polarity is predetermined by tau localization (in the neuronal cell) in the domain of the cell body defined by the centrosome. The short isoforms allow plasticity of the cytoskeleton whereas the longer isoforms may preferentially play a role in its stabilization. In Pongo pygmaeus (Bornean orangutan), this protein is Microtubule-associated protein tau (MAPT).